Here is a 1193-residue protein sequence, read N- to C-terminus: Probable cation-transporting ATPase 13A4 (1193 aa).

The Cytoplasmic portion of the chain corresponds to 1–32 (MGDHLEKSQHALLNEGDENEMEIFGYRTQGCR). Residues 33–53 (KALCLIGSIFSLGMLPLVFYW) lie within the membrane without spanning it. Residues 54 to 198 (RPAWRVWANC…DVEITPIWKL (145 aa)) lie on the Cytoplasmic side of the membrane. A helical membrane pass occupies residues 199–219 (LIKEVLNPFYIFQLFSVCLWF). Over 220 to 224 (SEDYK) the chain is Lumenal. Residues 225-245 (EYALAIILMSVISIALTVYDL) traverse the membrane as a helical segment. Over 246–401 (RQQSVKLHHL…NFKLYRDAIR (156 aa)) the chain is Cytoplasmic. Residues 402–422 (FLLCLVGTATIGMVYTLCVYV) traverse the membrane as a helical segment. The Lumenal portion of the chain corresponds to 423 to 437 (LSGEPPEEVVRKALD). Residues 438–458 (VITIAVPPALPAALTTGIIYA) form a helical membrane-spanning segment. Over 459 to 901 (QRRLKKKGIF…KEGRAALVTS (443 aa)) the chain is Cytoplasmic. Residue Asp487 is the 4-aspartylphosphate intermediate of the active site. Asp849 and Asp853 together coordinate Mg(2+). Residues 902-922 (FCMFKYMALYSMIQYVGVLLL) traverse the membrane as a helical segment. At 923-933 (YWKTNSLSNYQ) the chain is on the lumenal side. The helical transmembrane segment at 934–954 (FLFQDLAITTLIGVTMNLNGA) threads the bilayer. At 955–973 (NPKLVPFRPAGRLISPPLL) the chain is on the cytoplasmic side. The helical transmembrane segment at 974-994 (LSVVLNILLSLAMHIVGFILV) threads the bilayer. At 995–1036 (QKQPWYIMDYHSVCPVRNESASALAASPSVPEKTRSNSTFAS) the chain is on the lumenal side. A helical transmembrane segment spans residues 1037–1057 (FENTTIWFLGTINCIFVALVF). The Cytoplasmic portion of the chain corresponds to 1058–1071 (SKGKPFRQPTYTNY). A helical membrane pass occupies residues 1072-1092 (IFVLVLILQMGVCLFILFADI). Over 1093–1105 (PEMHRRLDLLCTP) the chain is Lumenal. Residues 1106–1126 (VLWRVYILIMISSNFVVSLAV) form a helical membrane-spanning segment. Residues 1127–1193 (EKAIIENRAL…PVFESNEEQL (67 aa)) lie on the Cytoplasmic side of the membrane.

Belongs to the cation transport ATPase (P-type) (TC 3.A.3) family. Type V subfamily. In terms of tissue distribution, expressed in brain and stomach.

Its subcellular location is the early endosome membrane. It localises to the late endosome membrane. The protein localises to the recycling endosome membrane. It catalyses the reaction ATP + H2O = ADP + phosphate + H(+). The chain is Probable cation-transporting ATPase 13A4 (Atp13a4) from Mus musculus (Mouse).